The following is a 143-amino-acid chain: Large ribosomal subunit protein uL11 (143 aa).

Belongs to the universal ribosomal protein uL11 family. Part of the ribosomal stalk of the 50S ribosomal subunit. Interacts with L10 and the large rRNA to form the base of the stalk. L10 forms an elongated spine to which L12 dimers bind in a sequential fashion forming a multimeric L10(L12)X complex. One or more lysine residues are methylated.

Forms part of the ribosomal stalk which helps the ribosome interact with GTP-bound translation factors. This is Large ribosomal subunit protein uL11 from Koribacter versatilis (strain Ellin345).